Here is a 242-residue protein sequence, read N- to C-terminus: Protein fmp-52, mitochondrial (242 aa).

A mitochondrion-targeting transit peptide spans 1-87 (MSTSTPTSTA…VISSLGTTRV (87 aa)). The interval 33–58 (SSQVQTISRRAPANPTNSSRLSPTVN) is disordered. Residues 35–58 (QVQTISRRAPANPTNSSRLSPTVN) show a composition bias toward polar residues.

It belongs to the FMP52 family.

The protein resides in the mitochondrion outer membrane. In Neurospora crassa (strain ATCC 24698 / 74-OR23-1A / CBS 708.71 / DSM 1257 / FGSC 987), this protein is Protein fmp-52, mitochondrial (fmp-52).